A 99-amino-acid polypeptide reads, in one-letter code: Large ribosomal subunit protein bL27 (99 aa).

The interval 13–65 (AHHKGGGSTTNGRNSAGRRLGAKRADGQEVHAGSIIYRQRGTKIHPGKNVGRG) is disordered.

The protein belongs to the bacterial ribosomal protein bL27 family.

The sequence is that of Large ribosomal subunit protein bL27 from Lactobacillus delbrueckii subsp. bulgaricus (strain ATCC BAA-365 / Lb-18).